The following is a 198-amino-acid chain: MAEKQTAKRNRREEILQSLALMLESSDGSQRITTAKLAASVGVSEAALYRHFPSKTRMFDSLIEFIEDSLITRINLILKDEKDTTARLRLIVLLILGFGERNPGLTRILTGHALMFEQDRLQGRINQLFERIEVQLRQVMREKKMREGEGYTLDETLLASQLLAFCEGMLSRFVRSEFKYRPTDDFEARWPLVAAQLQ.

Residues 10-70 (NRREEILQSL…SLIEFIEDSL (61 aa)) enclose the HTH tetR-type domain. Positions 33 to 52 (TTAKLAASVGVSEAALYRHF) form a DNA-binding region, H-T-H motif. A coiled-coil region spans residues 119 to 144 (DRLQGRINQLFERIEVQLRQVMREKK).

The protein belongs to the nucleoid occlusion factor SlmA family. Homodimer. Interacts with FtsZ.

The protein resides in the cytoplasm. The protein localises to the nucleoid. Functionally, required for nucleoid occlusion (NO) phenomenon, which prevents Z-ring formation and cell division over the nucleoid. Acts as a DNA-associated cell division inhibitor that binds simultaneously chromosomal DNA and FtsZ, and disrupts the assembly of FtsZ polymers. SlmA-DNA-binding sequences (SBS) are dispersed on non-Ter regions of the chromosome, preventing FtsZ polymerization at these regions. This chain is Nucleoid occlusion factor SlmA, found in Klebsiella pneumoniae (strain 342).